A 129-amino-acid polypeptide reads, in one-letter code: Large ribosomal subunit protein uL22 (129 aa).

The protein belongs to the universal ribosomal protein uL22 family. In terms of assembly, part of the 50S ribosomal subunit.

In terms of biological role, this protein binds specifically to 23S rRNA; its binding is stimulated by other ribosomal proteins, e.g. L4, L17, and L20. It is important during the early stages of 50S assembly. It makes multiple contacts with different domains of the 23S rRNA in the assembled 50S subunit and ribosome. Functionally, the globular domain of the protein is located near the polypeptide exit tunnel on the outside of the subunit, while an extended beta-hairpin is found that lines the wall of the exit tunnel in the center of the 70S ribosome. The polypeptide is Large ribosomal subunit protein uL22 (Metamycoplasma hominis (strain ATCC 23114 / DSM 25592 / NBRC 14850 / NCTC 10111 / PG21) (Mycoplasma hominis)).